A 436-amino-acid chain; its full sequence is tRNA (guanine(37)-N(1))-methyltransferase 1 (436 aa).

Residues His229, 277-278 (DL), and Asn325 contribute to the S-adenosyl-L-methionine site.

It belongs to the class I-like SAM-binding methyltransferase superfamily. TRM5/TYW2 family. Monomer.

The protein resides in the mitochondrion matrix. Its subcellular location is the nucleus. It localises to the cytoplasm. It carries out the reaction guanosine(37) in tRNA + S-adenosyl-L-methionine = N(1)-methylguanosine(37) in tRNA + S-adenosyl-L-homocysteine + H(+). Functionally, specifically methylates the N1 position of guanosine-37 in various cytoplasmic and mitochondrial tRNAs. Methylation is not dependent on the nature of the nucleoside 5' of the target nucleoside. This is the first step in the biosynthesis of wybutosine (yW), a modified base adjacent to the anticodon of tRNAs and required for accurate decoding. This is tRNA (guanine(37)-N(1))-methyltransferase 1 from Phaeodactylum tricornutum (strain CCAP 1055/1).